We begin with the raw amino-acid sequence, 386 residues long: S-adenosylmethionine synthase (386 aa).

H16 provides a ligand contact to ATP. D18 lines the Mg(2+) pocket. K(+) is bound at residue E44. E57 and Q100 together coordinate L-methionine. Positions 100–110 (QSPDINQGVDR) are flexible loop. ATP is bound by residues 164 to 166 (DGK), 230 to 231 (KF), D239, 245 to 246 (RK), A262, and K266. D239 lines the L-methionine pocket. L-methionine is bound at residue K270.

The protein belongs to the AdoMet synthase family. As to quaternary structure, homotetramer; dimer of dimers. Mg(2+) serves as cofactor. Requires K(+) as cofactor.

The protein localises to the cytoplasm. The catalysed reaction is L-methionine + ATP + H2O = S-adenosyl-L-methionine + phosphate + diphosphate. The protein operates within amino-acid biosynthesis; S-adenosyl-L-methionine biosynthesis; S-adenosyl-L-methionine from L-methionine: step 1/1. Functionally, catalyzes the formation of S-adenosylmethionine (AdoMet) from methionine and ATP. The overall synthetic reaction is composed of two sequential steps, AdoMet formation and the subsequent tripolyphosphate hydrolysis which occurs prior to release of AdoMet from the enzyme. The sequence is that of S-adenosylmethionine synthase from Helicobacter hepaticus (strain ATCC 51449 / 3B1).